The chain runs to 499 residues: Glycerol kinase (499 aa).

T13 is an ADP binding site. Residues T13, T14, and S15 each contribute to the ATP site. Residue T13 participates in sn-glycerol 3-phosphate binding. Residue R17 participates in ADP binding. Sn-glycerol 3-phosphate-binding residues include R83, E84, Y135, and D245. Residues R83, E84, Y135, D245, and Q246 each coordinate glycerol. Residues T267 and G310 each coordinate ADP. T267, G310, Q314, and A411 together coordinate ATP. ADP is bound by residues A411 and N415.

Belongs to the FGGY kinase family.

The catalysed reaction is glycerol + ATP = sn-glycerol 3-phosphate + ADP + H(+). Its pathway is polyol metabolism; glycerol degradation via glycerol kinase pathway; sn-glycerol 3-phosphate from glycerol: step 1/1. With respect to regulation, inhibited by fructose 1,6-bisphosphate (FBP). Functionally, key enzyme in the regulation of glycerol uptake and metabolism. Catalyzes the phosphorylation of glycerol to yield sn-glycerol 3-phosphate. The sequence is that of Glycerol kinase from Xylella fastidiosa (strain M12).